Reading from the N-terminus, the 263-residue chain is Large ribosomal subunit protein uL23m (263 aa).

Residues 1-45 (MPRLTVGTKNMLYPLQKTLAVGSCKPEQVPIRSLASVVESSSKIL) constitute a mitochondrion transit peptide.

This sequence belongs to the universal ribosomal protein uL23 family. Component of the mitochondrial large ribosomal subunit (mt-LSU). Mature yeast 74S mitochondrial ribosomes consist of a small (37S) and a large (54S) subunit. The 37S small subunit contains a 15S ribosomal RNA (15S mt-rRNA) and 34 different proteins. The 54S large subunit contains a 21S rRNA (21S mt-rRNA) and 46 different proteins. uL23m forms the wall of the exit tunnel. Interacts with the C-terminus of OXA1.

It is found in the mitochondrion. Component of the mitochondrial ribosome (mitoribosome), a dedicated translation machinery responsible for the synthesis of mitochondrial genome-encoded proteins, including at least some of the essential transmembrane subunits of the mitochondrial respiratory chain. The mitoribosomes are attached to the mitochondrial inner membrane and translation products are cotranslationally integrated into the membrane. The sequence is that of Large ribosomal subunit protein uL23m (MRP20) from Saccharomyces cerevisiae (strain ATCC 204508 / S288c) (Baker's yeast).